A 329-amino-acid chain; its full sequence is Deoxyhypusine hydroxylase (329 aa).

HEAT-like PBS-type repeat units lie at residues 65–91, 99–124, 232–258, and 265–292; these read LKHELAYCLGQSGHDAAIAPLRGVLED, RHEAAEALGALSDKGSLELLKKMRDD, FRHEIAFVFGQLSHPASIPSLTEALSN, and VRHEAAEALGSLGDEEGVEETLKKFLND. Residues His67, Glu68, His100, Glu101, His234, Glu235, His267, and Glu268 each contribute to the Fe cation site.

It belongs to the deoxyhypusine hydroxylase family. Fe(2+) is required as a cofactor.

The protein resides in the cytoplasm. Its subcellular location is the nucleus. The catalysed reaction is [eIF5A protein]-deoxyhypusine + AH2 + O2 = [eIF5A protein]-hypusine + A + H2O. It functions in the pathway protein modification; eIF5A hypusination. Its function is as follows. Catalyzes the hydroxylation of the N(6)-(4-aminobutyl)-L-lysine intermediate to form hypusine, an essential post-translational modification only found in mature eIF-5A factor. The polypeptide is Deoxyhypusine hydroxylase (Phaeosphaeria nodorum (strain SN15 / ATCC MYA-4574 / FGSC 10173) (Glume blotch fungus)).